The following is a 91-amino-acid chain: Small ribosomal subunit protein uS7 (91 aa).

This sequence belongs to the universal ribosomal protein uS7 family. Part of the 30S ribosomal subunit. Contacts proteins S9 and S11.

Its function is as follows. One of the primary rRNA binding proteins, it binds directly to 16S rRNA where it nucleates assembly of the head domain of the 30S subunit. Is located at the subunit interface close to the decoding center, probably blocks exit of the E-site tRNA. The polypeptide is Small ribosomal subunit protein uS7 (rpsG) (Apple proliferation phytoplasma).